Reading from the N-terminus, the 206-residue chain is Small ribosomal subunit protein uS3 (206 aa).

The KH type-2 domain maps to 39–107 (IRSYINESFK…SVEVNVVGIK (69 aa)).

The protein belongs to the universal ribosomal protein uS3 family. Part of the 30S ribosomal subunit. Forms a tight complex with proteins S10 and S14.

Its function is as follows. Binds the lower part of the 30S subunit head. Binds mRNA in the 70S ribosome, positioning it for translation. This chain is Small ribosomal subunit protein uS3, found in Wolbachia sp. subsp. Brugia malayi (strain TRS).